Reading from the N-terminus, the 317-residue chain is Apolipoprotein E (317 aa).

Positions 1–18 (MKVLWAALLVTFLAGCQA) are cleaved as a signal peptide. 8 repeat units span residues 80 to 101 (ALMDETMKELKAYKSELEEQLT), 102 to 123 (PVAEETRARLSKELQAAQARLG), 124 to 145 (ADMEDVRGRLAQYRGEVQAMLG), 146 to 167 (QSTEELRARLASHLRKLRKRLL), 168 to 189 (RDADDLQKRLAVYQAGAREGAE), 190 to 211 (RGVSAIRERLGPLVEQGRVRAA), 212 to 233 (TVGSLAGQPLQERAQAWGERLR), and 234 to 255 (ARMEEMGSRTRDRLDEVKEQVA). Residues 80–255 (ALMDETMKEL…RLDEVKEQVA (176 aa)) form an 8 X 22 AA approximate tandem repeats region. M143 carries the post-translational modification Methionine sulfoxide. S147 is modified (phosphoserine). The segment at 158-168 (HLRKLRKRLLR) is LDL and other lipoprotein receptors binding. 162-165 (LRKR) is a binding site for heparin. Residues 210 to 290 (AATVGSLAGQ…SWFEPLVEDM (81 aa)) form a lipid-binding and lipoprotein association region. 229-236 (GERLRARM) provides a ligand contact to heparin. A homooligomerization region spans residues 266-317 (QQIRLQAEAFQARLKSWFEPLVEDMQRQWAGLVEKVQAAMGTSAAPVPSDNH). The tract at residues 278-290 (RLKSWFEPLVEDM) is specificity for association with VLDL.

This sequence belongs to the apolipoprotein A1/A4/E family. In terms of assembly, homotetramer. May interact with ABCA1; functionally associated with ABCA1 in the biogenesis of HDLs. May interact with APP/A4 amyloid-beta peptide; the interaction is extremely stable in vitro but its physiological significance is unclear. May interact with MAPT. May interact with MAP2. In the cerebrospinal fluid, interacts with secreted SORL1. Interacts with PMEL; this allows the loading of PMEL luminal fragment on ILVs to induce fibril nucleation. In terms of processing, APOE exists as multiple glycosylated and sialylated glycoforms within cells and in plasma. The extent of glycosylation and sialylation are tissue and context specific. Glycated in plasma VLDL. Post-translationally, phosphorylated by FAM20C in the extracellular medium.

It localises to the secreted. Its subcellular location is the extracellular space. The protein resides in the extracellular matrix. It is found in the extracellular vesicle. The protein localises to the endosome. It localises to the multivesicular body. APOE is an apolipoprotein, a protein associating with lipid particles, that mainly functions in lipoprotein-mediated lipid transport between organs via the plasma and interstitial fluids. APOE is a core component of plasma lipoproteins and is involved in their production, conversion and clearance. Apolipoproteins are amphipathic molecules that interact both with lipids of the lipoprotein particle core and the aqueous environment of the plasma. As such, APOE associates with chylomicrons, chylomicron remnants, very low density lipoproteins (VLDL) and intermediate density lipoproteins (IDL) but shows a preferential binding to high-density lipoproteins (HDL). It also binds a wide range of cellular receptors including the LDL receptor/LDLR, the LDL receptor-related proteins LRP1, LRP2 and LRP8 and the very low-density lipoprotein receptor/VLDLR that mediate the cellular uptake of the APOE-containing lipoprotein particles. Finally, APOE also has a heparin-binding activity and binds heparan-sulfate proteoglycans on the surface of cells, a property that supports the capture and the receptor-mediated uptake of APOE-containing lipoproteins by cells. A main function of APOE is to mediate lipoprotein clearance through the uptake of chylomicrons, VLDLs, and HDLs by hepatocytes. APOE is also involved in the biosynthesis by the liver of VLDLs as well as their uptake by peripheral tissues ensuring the delivery of triglycerides and energy storage in muscle, heart and adipose tissues. By participating in the lipoprotein-mediated distribution of lipids among tissues, APOE plays a critical role in plasma and tissues lipid homeostasis. APOE is also involved in two steps of reverse cholesterol transport, the HDLs-mediated transport of cholesterol from peripheral tissues to the liver, and thereby plays an important role in cholesterol homeostasis. First, it is functionally associated with ABCA1 in the biogenesis of HDLs in tissues. Second, it is enriched in circulating HDLs and mediates their uptake by hepatocytes. APOE also plays an important role in lipid transport in the central nervous system, regulating neuron survival and sprouting. The chain is Apolipoprotein E (APOE) from Gorilla gorilla gorilla (Western lowland gorilla).